Consider the following 1481-residue polypeptide: Coiled-coil domain-containing protein 88B (1481 aa).

2 coiled-coil regions span residues 200 to 225 and 258 to 491; these read ELVA…RERD and SHHL…GSQH. 3 disordered regions span residues 430–458, 494–731, and 1331–1481; these read ELQR…QDEV, LEEQ…AIPE, and PRRE…SLSQ. S441 carries the phosphoserine modification. Polar residues-rich tracts occupy residues 542 to 557 and 568 to 590; these read ASYS…SQAP and QMVS…TVET. Position 649 is a phosphoserine (S649). Residues 660-695 are compositionally biased toward basic and acidic residues; it reads TLREPLKDQKALDRELELSKQQKETGRHEQRPKGLE. Residues 731 to 1308 are a coiled coil; sequence EEQALRDEVA…KIMDQYRVLE (578 aa). A phosphoserine mark is found at S1353 and S1384. Positions 1371-1386 are enriched in polar residues; that stretch reads TGSSSPAPMRRVQSSL. Basic and acidic residues predominate over residues 1453 to 1472; that stretch reads LSEHEADDTREAFQEQKPEK.

This sequence belongs to the CCDC88 family. Homodimer. Interacts with DOCK8. Interacts (via C-terminus) with intact microtubules. Interacts with dynein-dynactin motor complex. Interacts (via C-terminus) with HSPA5. Abundantly expressed in immune cells, including both CD4(+) and CD8(+) T-cells and in myeloid cells (at protein level). Expressed in endothelium (at protein level). Expressed specifically in spleen, bone marrow, lymph nodes and thymus. Expressed in liver and heart.

The protein localises to the membrane. It is found in the cytoplasm. The protein resides in the cytoskeleton. It localises to the microtubule organizing center. Its subcellular location is the endoplasmic reticulum. The protein localises to the golgi apparatus. Its function is as follows. Acts as a positive regulator of T-cell maturation and inflammatory function. Required for several functions of T-cells in both the CD4(+) and the CD8(+) compartments and this includes expression of cell surface markers of activation, proliferation, and cytokine production in response to specific or non-specific stimulation and during the course of infection with the mouse malaria parasite Plasmodium berghei. Enhances NK cell cytotoxicity by positively regulating polarization of microtubule-organizing center (MTOC) to cytotoxic synapse, lytic granule transport along microtubules, and dynein-mediated clustering to MTOC. Interacts with HSPA5 and stabilizes the interaction between HSPA5 and ERN1, leading to suppression of ERN1-induced JNK activation and endoplasmic reticulum stress-induced apoptosis. This is Coiled-coil domain-containing protein 88B (Ccdc88b) from Mus musculus (Mouse).